The following is a 1079-amino-acid chain: Tudor domain-containing protein 7A (1079 aa).

The HTH OST-type 1 domain maps to 3 to 76 (DVELVKKMLR…TGEVMCFAGV (74 aa)). A disordered region spans residues 153 to 175 (LPSSRAPAWQMNRKSPVPEKTSV). 2 HTH OST-type domains span residues 205 to 270 (DVEL…RLVY) and 366 to 434 (LTTE…ILYT). Tudor domains follow at residues 519-576 (SPKI…FMTL) and 708-765 (RPFC…FLKE).

It belongs to the TDRD7 family.

Its subcellular location is the cytoplasm. In terms of biological role, component of specific cytoplasmic RNA granules involved in post-transcriptional regulation of specific genes: probably acts by binding to specific mRNAs and regulating their translation. Probably required during spermatogenesis. Required for structural integrity of granules in primordial germ cells (PGCs). This chain is Tudor domain-containing protein 7A (tdrd7a), found in Danio rerio (Zebrafish).